Reading from the N-terminus, the 525-residue chain is MTDRTSVSATDRILIIDFGSQVTQLIARRVRESGVYSEIQPFNTVTAASIAAFAPKGVILSGGPASVTAADTPRAPIELFTMGLPVLGICYGQQTMVAQLGGRVEAPDHREFGRAFVEVTAGCALFDGVWTPGERDQVWMSHGDRVDAIPEGFSVVAVSEGAPYAAIADEARHFYGVQFHPEVVHTPKGAALLRNFTHGICGCGGDWTMAAFKDQAIARVREQVGSGRVICGLSGGVDSSVVAALIHEAIGEQLVCVLVDHGMMRQGETEQVVRVFRDRFNITLVHRDASELFLGKLDGVVDPEAKRKIIGATFIDVFDEEARKVGGADFLAQGTLYPDVIESVSFTGGPSVTIKSHHNVGGLPERMKMALVEPLRELFKDEVRDLGRELGLPDEMVGRHPFPGPGLAIRIPGQPLTREKLDILRRADAIYLEEIRNAGLYDVIWQAFAVLLPVRTVGVMGDARSYDFALALRAVTSTDGMTADYYPFDHTFLGRVANRIINEVKGVNRVVYDITSKPPGTIEWE.

The Glutamine amidotransferase type-1 domain occupies Arg-12–Asp-206. The active-site Nucleophile is the Cys-90. Catalysis depends on residues His-180 and Glu-182. The 193-residue stretch at Trp-207 to Arg-399 folds into the GMPS ATP-PPase domain. ATP is bound at residue Ser-234–Ser-240.

In terms of assembly, homodimer.

The catalysed reaction is XMP + L-glutamine + ATP + H2O = GMP + L-glutamate + AMP + diphosphate + 2 H(+). It functions in the pathway purine metabolism; GMP biosynthesis; GMP from XMP (L-Gln route): step 1/1. Its function is as follows. Catalyzes the synthesis of GMP from XMP. The polypeptide is GMP synthase [glutamine-hydrolyzing] (Rhodospirillum rubrum (strain ATCC 11170 / ATH 1.1.1 / DSM 467 / LMG 4362 / NCIMB 8255 / S1)).